The primary structure comprises 276 residues: Aliphatic sulfonates import ATP-binding protein SsuB 1 (276 aa).

Residues 1–21 (MSTGNVTTLRRPEAPPSLPAG) form a disordered region. The region spanning 39–259 (FSFRNVTKSF…RHGTPEFARL (221 aa)) is the ABC transporter domain. 71–78 (GKSGCGKS) lines the ATP pocket.

It belongs to the ABC transporter superfamily. Aliphatic sulfonates importer (TC 3.A.1.17.2) family. As to quaternary structure, the complex is composed of two ATP-binding proteins (SsuB), two transmembrane proteins (SsuC) and a solute-binding protein (SsuA).

It localises to the cell inner membrane. The enzyme catalyses ATP + H2O + aliphatic sulfonate-[sulfonate-binding protein]Side 1 = ADP + phosphate + aliphatic sulfonateSide 2 + [sulfonate-binding protein]Side 1.. Functionally, part of the ABC transporter complex SsuABC involved in aliphatic sulfonates import. Responsible for energy coupling to the transport system. The protein is Aliphatic sulfonates import ATP-binding protein SsuB 1 of Agrobacterium fabrum (strain C58 / ATCC 33970) (Agrobacterium tumefaciens (strain C58)).